The following is a 457-amino-acid chain: Bifunctional protein GlmU (457 aa).

The pyrophosphorylase stretch occupies residues 1 to 229; the sequence is MDLAAVILAA…PVEVTGINDR (229 aa). Residues 8-11, lysine 22, glutamine 72, and 77-78 contribute to the UDP-N-acetyl-alpha-D-glucosamine site; these read LAAG and GT. Aspartate 102 is a Mg(2+) binding site. UDP-N-acetyl-alpha-D-glucosamine is bound by residues glycine 139, glutamate 154, asparagine 169, and asparagine 227. Residue asparagine 227 coordinates Mg(2+). The segment at 230–250 is linker; it reads RQLAEVEKYLRRRVLEDLMQS. Residues 251–457 form an N-acetyltransferase region; the sequence is GVTVLDPAST…WAAKKRDKKV (207 aa). Residues arginine 332 and lysine 350 each contribute to the UDP-N-acetyl-alpha-D-glucosamine site. The active-site Proton acceptor is histidine 362. 2 residues coordinate UDP-N-acetyl-alpha-D-glucosamine: tyrosine 365 and asparagine 376. Acetyl-CoA contacts are provided by residues 385–386, serine 404, alanine 422, and arginine 439; that span reads NY.

In the N-terminal section; belongs to the N-acetylglucosamine-1-phosphate uridyltransferase family. The protein in the C-terminal section; belongs to the transferase hexapeptide repeat family. Homotrimer. Requires Mg(2+) as cofactor.

The protein localises to the cytoplasm. The catalysed reaction is alpha-D-glucosamine 1-phosphate + acetyl-CoA = N-acetyl-alpha-D-glucosamine 1-phosphate + CoA + H(+). It catalyses the reaction N-acetyl-alpha-D-glucosamine 1-phosphate + UTP + H(+) = UDP-N-acetyl-alpha-D-glucosamine + diphosphate. It participates in nucleotide-sugar biosynthesis; UDP-N-acetyl-alpha-D-glucosamine biosynthesis; N-acetyl-alpha-D-glucosamine 1-phosphate from alpha-D-glucosamine 6-phosphate (route II): step 2/2. It functions in the pathway nucleotide-sugar biosynthesis; UDP-N-acetyl-alpha-D-glucosamine biosynthesis; UDP-N-acetyl-alpha-D-glucosamine from N-acetyl-alpha-D-glucosamine 1-phosphate: step 1/1. Its pathway is bacterial outer membrane biogenesis; LPS lipid A biosynthesis. Catalyzes the last two sequential reactions in the de novo biosynthetic pathway for UDP-N-acetylglucosamine (UDP-GlcNAc). The C-terminal domain catalyzes the transfer of acetyl group from acetyl coenzyme A to glucosamine-1-phosphate (GlcN-1-P) to produce N-acetylglucosamine-1-phosphate (GlcNAc-1-P), which is converted into UDP-GlcNAc by the transfer of uridine 5-monophosphate (from uridine 5-triphosphate), a reaction catalyzed by the N-terminal domain. The sequence is that of Bifunctional protein GlmU from Pelotomaculum thermopropionicum (strain DSM 13744 / JCM 10971 / SI).